A 256-amino-acid chain; its full sequence is Imidazole glycerol phosphate synthase subunit HisF (256 aa).

Catalysis depends on residues aspartate 13 and aspartate 132.

It belongs to the HisA/HisF family. In terms of assembly, heterodimer of HisH and HisF.

It localises to the cytoplasm. It carries out the reaction 5-[(5-phospho-1-deoxy-D-ribulos-1-ylimino)methylamino]-1-(5-phospho-beta-D-ribosyl)imidazole-4-carboxamide + L-glutamine = D-erythro-1-(imidazol-4-yl)glycerol 3-phosphate + 5-amino-1-(5-phospho-beta-D-ribosyl)imidazole-4-carboxamide + L-glutamate + H(+). It participates in amino-acid biosynthesis; L-histidine biosynthesis; L-histidine from 5-phospho-alpha-D-ribose 1-diphosphate: step 5/9. Its function is as follows. IGPS catalyzes the conversion of PRFAR and glutamine to IGP, AICAR and glutamate. The HisF subunit catalyzes the cyclization activity that produces IGP and AICAR from PRFAR using the ammonia provided by the HisH subunit. The polypeptide is Imidazole glycerol phosphate synthase subunit HisF (Leptospira borgpetersenii serovar Hardjo-bovis (strain JB197)).